The primary structure comprises 187 residues: Flavin prenyltransferase LpdB (187 aa).

Residues 10-12 (GAS), serine 37, 88-91 (SMKT), and arginine 123 contribute to the FMN site. The dimethylallyl phosphate site is built by tyrosine 153 and lysine 169.

This sequence belongs to the UbiX/PAD1 family.

The catalysed reaction is dimethylallyl phosphate + FMNH2 = prenylated FMNH2 + phosphate. Involved in tannin degradation. Flavin prenyltransferase that catalyzes the synthesis of the prenylated FMN cofactor (prenyl-FMN) for gallate decarboxylase LpdC. The prenyltransferase is metal-independent and links a dimethylallyl moiety from dimethylallyl monophosphate (DMAP) to the flavin N5 and C6 atoms of FMN. The chain is Flavin prenyltransferase LpdB from Lactiplantibacillus plantarum (strain ATCC BAA-793 / NCIMB 8826 / WCFS1) (Lactobacillus plantarum).